The following is a 147-amino-acid chain: 3-dehydroquinate dehydratase (147 aa).

Residue Tyr24 is the Proton acceptor of the active site. Asn75, His81, and Asp88 together coordinate substrate. His101 acts as the Proton donor in catalysis. Substrate-binding positions include 102 to 103 (IS) and Arg112.

This sequence belongs to the type-II 3-dehydroquinase family. Homododecamer.

It catalyses the reaction 3-dehydroquinate = 3-dehydroshikimate + H2O. Its pathway is metabolic intermediate biosynthesis; chorismate biosynthesis; chorismate from D-erythrose 4-phosphate and phosphoenolpyruvate: step 3/7. In terms of biological role, catalyzes a trans-dehydration via an enolate intermediate. The sequence is that of 3-dehydroquinate dehydratase from Cereibacter sphaeroides (strain ATCC 17023 / DSM 158 / JCM 6121 / CCUG 31486 / LMG 2827 / NBRC 12203 / NCIMB 8253 / ATH 2.4.1.) (Rhodobacter sphaeroides).